We begin with the raw amino-acid sequence, 322 residues long: Aspartate--ammonia ligase (322 aa).

It belongs to the class-II aminoacyl-tRNA synthetase family. AsnA subfamily.

The protein resides in the cytoplasm. It carries out the reaction L-aspartate + NH4(+) + ATP = L-asparagine + AMP + diphosphate + H(+). Its pathway is amino-acid biosynthesis; L-asparagine biosynthesis; L-asparagine from L-aspartate (ammonia route): step 1/1. The protein is Aspartate--ammonia ligase of Lactiplantibacillus plantarum (strain ATCC BAA-793 / NCIMB 8826 / WCFS1) (Lactobacillus plantarum).